Reading from the N-terminus, the 329-residue chain is Biotin synthase (329 aa).

Positions 48 to 278 (FLGTGVDLCS…DRKIAVCGGR (231 aa)) constitute a Radical SAM core domain. [4Fe-4S] cluster is bound by residues C66, C70, and C73. The [2Fe-2S] cluster site is built by S143 and C203.

The protein belongs to the radical SAM superfamily. Biotin synthase family. In terms of assembly, homodimer. [4Fe-4S] cluster serves as cofactor. [2Fe-2S] cluster is required as a cofactor.

It catalyses the reaction (4R,5S)-dethiobiotin + (sulfur carrier)-SH + 2 reduced [2Fe-2S]-[ferredoxin] + 2 S-adenosyl-L-methionine = (sulfur carrier)-H + biotin + 2 5'-deoxyadenosine + 2 L-methionine + 2 oxidized [2Fe-2S]-[ferredoxin]. The protein operates within cofactor biosynthesis; biotin biosynthesis; biotin from 7,8-diaminononanoate: step 2/2. Catalyzes the conversion of dethiobiotin (DTB) to biotin by the insertion of a sulfur atom into dethiobiotin via a radical-based mechanism. The chain is Biotin synthase from Geobacter sulfurreducens (strain ATCC 51573 / DSM 12127 / PCA).